The primary structure comprises 256 residues: N-glycosylase/DNA lyase (256 aa).

Residues Gln31, Ser58, and Trp69 each coordinate 8-oxoguanine. Residues 125-184 are helix-hairpin-helix; the sequence is TLRQLSHIVGARREQKTLVFTIKILNYAYMCSRGVNRVLPFDIPIPVDYRVARLTWCAGL. Lys140 serves as the catalytic Schiff-base intermediate with DNA. 8-oxoguanine contacts are provided by Phe144 and Pro170. Asp172 is a catalytic residue. Residues Asp218 and Trp222 each coordinate 8-oxoguanine.

It belongs to the archaeal N-glycosylase/DNA lyase (AGOG) family.

It carries out the reaction 2'-deoxyribonucleotide-(2'-deoxyribose 5'-phosphate)-2'-deoxyribonucleotide-DNA = a 3'-end 2'-deoxyribonucleotide-(2,3-dehydro-2,3-deoxyribose 5'-phosphate)-DNA + a 5'-end 5'-phospho-2'-deoxyribonucleoside-DNA + H(+). DNA repair enzyme that is part of the base excision repair (BER) pathway; protects from oxidative damage by removing the major product of DNA oxidation, 8-oxoguanine (GO), from single- and double-stranded DNA substrates. The polypeptide is N-glycosylase/DNA lyase (Pyrobaculum aerophilum (strain ATCC 51768 / DSM 7523 / JCM 9630 / CIP 104966 / NBRC 100827 / IM2)).